The following is a 330-amino-acid chain: Aspartate--ammonia ligase (330 aa).

It belongs to the class-II aminoacyl-tRNA synthetase family. AsnA subfamily.

Its subcellular location is the cytoplasm. The enzyme catalyses L-aspartate + NH4(+) + ATP = L-asparagine + AMP + diphosphate + H(+). The protein operates within amino-acid biosynthesis; L-asparagine biosynthesis; L-asparagine from L-aspartate (ammonia route): step 1/1. The sequence is that of Aspartate--ammonia ligase from Salmonella agona (strain SL483).